The sequence spans 621 residues: Chaperone protein HtpG (621 aa).

The segment at 1–341 (MSNQEYTFQT…SEDLPLNVSR (341 aa)) is a; substrate-binding. The interval 342-547 (EILQQNKILA…GDEQNAMMAN (206 aa)) is b. The c stretch occupies residues 548–621 (LMRQMGQNMP…RLNSVLLKAL (74 aa)).

The protein belongs to the heat shock protein 90 family. As to quaternary structure, homodimer.

The protein localises to the cytoplasm. Functionally, molecular chaperone. Has ATPase activity. This Helicobacter acinonychis (strain Sheeba) protein is Chaperone protein HtpG.